A 167-amino-acid polypeptide reads, in one-letter code: Lipoprotein signal peptidase (167 aa).

4 helical membrane-spanning segments follow: residues 8–28 (TFLT…VVLL), 46–66 (WGHF…FGLF), 68–88 (QYKI…ALFL), and 101–121 (IALT…LLHG). Catalysis depends on residues Asp-125 and Asp-143. The helical transmembrane segment at 139–159 (FNLADAFISIGTLLLIGHLYF) threads the bilayer.

This sequence belongs to the peptidase A8 family.

The protein resides in the cell inner membrane. The enzyme catalyses Release of signal peptides from bacterial membrane prolipoproteins. Hydrolyzes -Xaa-Yaa-Zaa-|-(S,diacylglyceryl)Cys-, in which Xaa is hydrophobic (preferably Leu), and Yaa (Ala or Ser) and Zaa (Gly or Ala) have small, neutral side chains.. Its pathway is protein modification; lipoprotein biosynthesis (signal peptide cleavage). This protein specifically catalyzes the removal of signal peptides from prolipoproteins. The sequence is that of Lipoprotein signal peptidase from Chlamydia trachomatis serovar L2 (strain ATCC VR-902B / DSM 19102 / 434/Bu).